The sequence spans 142 residues: Large ribosomal subunit protein uL11 (142 aa).

The protein belongs to the universal ribosomal protein uL11 family. As to quaternary structure, part of the ribosomal stalk of the 50S ribosomal subunit. Interacts with L10 and the large rRNA to form the base of the stalk. L10 forms an elongated spine to which L12 dimers bind in a sequential fashion forming a multimeric L10(L12)X complex. One or more lysine residues are methylated.

Forms part of the ribosomal stalk which helps the ribosome interact with GTP-bound translation factors. This is Large ribosomal subunit protein uL11 from Shewanella pealeana (strain ATCC 700345 / ANG-SQ1).